The chain runs to 108 residues: Ig kappa chain V region BS-5 (108 aa).

The segment at 1–23 (DVVMTQTPASVSEPVGGTVTIKC) is framework-1. Disulfide bonds link Cys23/Cys88 and Cys80/Gly108. Positions 24–34 (QASQSIYSNLA) are complementarity-determining-1. Positions 35–49 (WYQZKPGQPPKLLIY) are framework-2. The interval 50–56 (KASTLES) is complementarity-determining-2. The segment at 57–88 (GVPSRFKGSGSGTDFTLTISDLECADAATYFC) is framework-3. Residues 89 to 97 (QGSBYTGTV) form a complementarity-determining-3 region. The framework-4 stretch occupies residues 98–107 (FGGGTEVVVK).

The sequence is that of Ig kappa chain V region BS-5 from Oryctolagus cuniculus (Rabbit).